The sequence spans 150 residues: MEIILLNKVANLGGLGDNVTVKSGYARNFLFPQGQAVPATKANVEKFEARRAELEAKIAEQLAAAEARAAKVAELAEVTIASPAGDEGKLFGSVGTRDIALAITAAGVEIAKSEVKLPTGTLRETGEFEIDLQLHSEVTATIKLVIIQEA.

This sequence belongs to the bacterial ribosomal protein bL9 family.

Its function is as follows. Binds to the 23S rRNA. This chain is Large ribosomal subunit protein bL9, found in Pseudoalteromonas atlantica (strain T6c / ATCC BAA-1087).